The following is a 242-amino-acid chain: ATP-dependent dethiobiotin synthetase BioD (242 aa).

12 to 17 (EVGKTV) serves as a coordination point for ATP. Residue Thr16 participates in Mg(2+) binding. The active site involves Lys37. Residue Ser41 coordinates substrate. Residues Asp51 and 112–115 (EGAG) each bind ATP. The Mg(2+) site is built by Asp51 and Glu112.

The protein belongs to the dethiobiotin synthetase family. In terms of assembly, homodimer. It depends on Mg(2+) as a cofactor.

Its subcellular location is the cytoplasm. It carries out the reaction (7R,8S)-7,8-diammoniononanoate + CO2 + ATP = (4R,5S)-dethiobiotin + ADP + phosphate + 3 H(+). Its pathway is cofactor biosynthesis; biotin biosynthesis; biotin from 7,8-diaminononanoate: step 1/2. Functionally, catalyzes a mechanistically unusual reaction, the ATP-dependent insertion of CO2 between the N7 and N8 nitrogen atoms of 7,8-diaminopelargonic acid (DAPA, also called 7,8-diammoniononanoate) to form a ureido ring. This Bacillus cereus (strain AH820) protein is ATP-dependent dethiobiotin synthetase BioD.